The sequence spans 320 residues: N-acetylneuraminate lyase (320 aa).

Positions 51 and 52 each coordinate aceneuramate. Tyr-143 serves as the catalytic Proton donor. Lys-173 (schiff-base intermediate with substrate) is an active-site residue. 5 residues coordinate aceneuramate: Thr-175, Gly-199, Asp-201, Glu-202, and Ser-218. A Phosphoserine modification is found at Ser-308.

It belongs to the DapA family. NanA subfamily. In terms of assembly, homotetramer.

Its subcellular location is the cytoplasm. The enzyme catalyses aceneuramate = aldehydo-N-acetyl-D-mannosamine + pyruvate. It participates in amino-sugar metabolism; N-acetylneuraminate degradation. Catalyzes the cleavage of N-acetylneuraminic acid (sialic acid) to form pyruvate and N-acetylmannosamine via a Schiff base intermediate. It prevents sialic acids from being recycled and returning to the cell surface. Involved in the N-glycolylneuraminic acid (Neu5Gc) degradation pathway. The chain is N-acetylneuraminate lyase from Mus musculus (Mouse).